The primary structure comprises 116 residues: Nucleoid-associated protein PMT9312_0020 (116 aa).

Belongs to the YbaB/EbfC family. Homodimer.

The protein localises to the cytoplasm. Its subcellular location is the nucleoid. Binds to DNA and alters its conformation. May be involved in regulation of gene expression, nucleoid organization and DNA protection. The chain is Nucleoid-associated protein PMT9312_0020 from Prochlorococcus marinus (strain MIT 9312).